Reading from the N-terminus, the 207-residue chain is Large ribosomal subunit protein uL4 (207 aa).

The tract at residues 49-78 is disordered; the sequence is HAVKNRSAVSGGGRKPWRQKGTGRARQGSI.

It belongs to the universal ribosomal protein uL4 family. In terms of assembly, part of the 50S ribosomal subunit.

Its function is as follows. One of the primary rRNA binding proteins, this protein initially binds near the 5'-end of the 23S rRNA. It is important during the early stages of 50S assembly. It makes multiple contacts with different domains of the 23S rRNA in the assembled 50S subunit and ribosome. Functionally, forms part of the polypeptide exit tunnel. The polypeptide is Large ribosomal subunit protein uL4 (rplD) (Streptococcus pyogenes serotype M1).